A 651-amino-acid polypeptide reads, in one-letter code: MSYEGREERPEQIAEPTFENVSEHNEHDSGSAEAQVETLEVPLSNETDNDDATENAVPAEVQAPEEPKEPETVDNIDPADDDPNSVAAPKVEEKKSKKKAKDEKPLTYTTGGYLYCRSNGLIPHVMKRYFYMLEGPMSMDLLDHYYKKHFHGTLQGNPTEPSLASEQMHDSDADSLFQSANDHLNRIAKATQDCRGLLFYSKSQSTSVPSGIINLTDAVSIEPGTGNKFTINFNNGKSETLEALDPESKNTWITDLKNAIAKKKETKDKIKELRAYNDTLKRLGKLAARSGPSASETFRYFLPMLSNGRDAKKSSSKSHGGKQNNSVAKDGLFDFFQNMIKGKTPQNDTASPIDNETSADPVDTTVEAQSVEVPENETNQIPTTEEHFPATTEEVAPASEEKPATGPAEESTSTQNVEQASTQNDNGTPIGQIADAIEEDVKGTAQSVEQAFIEETDIALPDIALPDVATPTADDQDPSTAATNEESVVSNEDRTSKKAGKKHHRHHKKKKGGNKRVFGFKLHKYAKPTKSVKTLQADPSLEFAKAGFEIFPSNLSKKLSGLVQKKVHKKFDKDGRLKEISQFSKTTIKPETPLTPTTTPTPRTAAQEDPAEETTDALASAEGENNQMPQVLETEAAPSIASEGRSITVNA.

2 stretches are compositionally biased toward basic and acidic residues: residues 1-12 (MSYEGREERPEQ) and 21-30 (VSEHNEHDSG). Positions 1 to 102 (MSYEGREERP…EKKSKKKAKD (102 aa)) are disordered. Residues 72–83 (TVDNIDPADDDP) show a composition bias toward acidic residues. Positions 90-102 (KVEEKKSKKKAKD) are enriched in basic and acidic residues. Residues 194-261 (CRGLLFYSKS…WITDLKNAIA (68 aa)) form the PH domain. Disordered stretches follow at residues 365–430 (TVEA…GTPI), 468–514 (VATP…KGGN), and 587–630 (TIKP…QMPQ). Composition is skewed to polar residues over residues 410-429 (ESTS…NGTP) and 478-490 (PSTA…SVVS). The span at 497–514 (KKAGKKHHRHHKKKKGGN) shows a compositional bias: basic residues. The segment covering 587-604 (TIKPETPLTPTTTPTPRT) has biased composition (low complexity).

This is Meiotic expression up-regulated protein 6 (meu6) from Schizosaccharomyces pombe (strain 972 / ATCC 24843) (Fission yeast).